The primary structure comprises 507 residues: Keratin, type II cuticular Hb5 (507 aa).

The segment at 1–123 (MSCRSYRISS…PNAQCVKQEE (123 aa)) is head. An IF rod domain is found at 123–434 (EKEQIKSLNS…RLLEGEEHRL (312 aa)). The coil 1A stretch occupies residues 124–158 (KEQIKSLNSRFAAFIDKVRFLEQQNKLLETKWQFY). Residues 159-168 (QNQRCCESNL) form a linker 1 region. The interval 169–269 (EPLFSGYIET…YEEEIRVLQA (101 aa)) is coil 1B. Lysine 229 is covalently cross-linked (Glycyl lysine isopeptide (Lys-Gly) (interchain with G-Cter in SUMO1)). A linker 12 region spans residues 270-286 (HISDTSVIVKMDNSRDL). The coil 2 stretch occupies residues 287–430 (NMDCIIAEIK…ATYRRLLEGE (144 aa)). The tail stretch occupies residues 431–507 (EHRLCEGVGS…CGSSRSVRFA (77 aa)).

The protein belongs to the intermediate filament family. As to quaternary structure, heterotetramer of two type I and two type II keratins. In terms of tissue distribution, synthesis occurs immediately above a small population of matrix cells at the base of the hair bulb and the trichocytes lining the dermal papilla and extends upward through the matrix and ends in the lower part of the cortex of the hair shaft.

The protein is Keratin, type II cuticular Hb5 (KRT85) of Homo sapiens (Human).